A 212-amino-acid chain; its full sequence is MHDYQQKFIEFAIQRNVLRFGEFTLKSGRTSPYFFNAGLFNTGNDLLELSKAYAAAIARSGLDYDIIFGPAYKGIPLATVTAMALATDGNSKPFAFNRKEKKDHGEGGNIVGAPLQGKVLIVDDVITAGTAIRESIDIIRAAGAEPAGVLIALDRQEKGNGELSAIQEVEKEFGIPVVSIIRLEQVLDYLKSNPEFAGHAENVASYRDRYGV.

Lys-26 is a 5-phospho-alpha-D-ribose 1-diphosphate binding site. Phe-34–Phe-35 lines the orotate pocket. 5-phospho-alpha-D-ribose 1-diphosphate-binding positions include Tyr-72 to Lys-73, Arg-98, Lys-99, Lys-102, His-104, and Asp-123 to Ala-131. The orotate site is built by Thr-127 and Arg-155.

Belongs to the purine/pyrimidine phosphoribosyltransferase family. PyrE subfamily. Homodimer. Mg(2+) is required as a cofactor.

The catalysed reaction is orotidine 5'-phosphate + diphosphate = orotate + 5-phospho-alpha-D-ribose 1-diphosphate. Its pathway is pyrimidine metabolism; UMP biosynthesis via de novo pathway; UMP from orotate: step 1/2. Functionally, catalyzes the transfer of a ribosyl phosphate group from 5-phosphoribose 1-diphosphate to orotate, leading to the formation of orotidine monophosphate (OMP). The chain is Orotate phosphoribosyltransferase from Marinobacter nauticus (strain ATCC 700491 / DSM 11845 / VT8) (Marinobacter aquaeolei).